The following is a 20-amino-acid chain: Astacin-like peptidase p18 (20 aa).

The Peptidase M12A domain maps to 1–20 (NAIPGNYYRWPYAKVPYVID).

The cofactor is Zn(2+).

Its function is as follows. Active against casein. Has a role as a digestive enzyme. In Argiope aurantia (Black-and-yellow garden spider), this protein is Astacin-like peptidase p18.